Reading from the N-terminus, the 410-residue chain is MAFINENYLKLPGSYLFSEIARRVDNFRKENPNAKIIRLGIGDVTKPLAPAVIDALHKAVDEMAKEETFKGYGPEQGYSFLVSKIIEYDYMPRGIRLDEDEVFVSDGAKSDTGNFQEIFGLDNKVAVTDPVYPVYVDSNVMAGRTGKYLANGYFENITYLPCTAENNFIPELPKEKVDIIYLCFPNNPTGMTLSREELKKWVDYARENRAIILFDSAYEAYIREKDVPHSIYEVEGADEVAIEFRSFSKTAGFTGTRCAYTVVPKKVVAYTKNGEAHQLNSLWNRRQTTKFNGVPYIIQRAAAAVYTPEGQKQTKETIDYYMENAKIIKQGLEDIGLTVFGGVNAPYIWLKTPDGISSWEFFDIMLKEINVVGTPGSGFGPSGEGYFRLTAFGSRENTLEAVERFKNLKF.

Tyr-15 and Gly-42 together coordinate substrate. Pyridoxal 5'-phosphate contacts are provided by residues Tyr-72, 108-109 (AK), Tyr-132, Asn-187, Tyr-218, and 246-248 (SFS). The substrate site is built by Lys-109, Tyr-132, and Asn-187. Lys-249 is subject to N6-(pyridoxal phosphate)lysine. Residues Arg-257 and Asn-292 each coordinate pyridoxal 5'-phosphate. Substrate contacts are provided by Asn-292 and Arg-388.

The protein belongs to the class-I pyridoxal-phosphate-dependent aminotransferase family. LL-diaminopimelate aminotransferase subfamily. In terms of assembly, homodimer. It depends on pyridoxal 5'-phosphate as a cofactor.

The enzyme catalyses (2S,6S)-2,6-diaminopimelate + 2-oxoglutarate = (S)-2,3,4,5-tetrahydrodipicolinate + L-glutamate + H2O + H(+). It participates in amino-acid biosynthesis; L-lysine biosynthesis via DAP pathway; LL-2,6-diaminopimelate from (S)-tetrahydrodipicolinate (aminotransferase route): step 1/1. Functionally, involved in the synthesis of meso-diaminopimelate (m-DAP or DL-DAP), required for both lysine and peptidoglycan biosynthesis. Catalyzes the direct conversion of tetrahydrodipicolinate to LL-diaminopimelate. Can also use m-DAP instead of LL-DAP as the amino-group donor. The polypeptide is LL-diaminopimelate aminotransferase (Acetivibrio thermocellus (strain ATCC 27405 / DSM 1237 / JCM 9322 / NBRC 103400 / NCIMB 10682 / NRRL B-4536 / VPI 7372) (Clostridium thermocellum)).